Consider the following 186-residue polypeptide: Trafficking protein particle complex subunit 3 (186 aa).

It belongs to the TRAPP small subunits family. BET3 subfamily. As to quaternary structure, homodimer. Part of the multisubunit TRAPP (transport protein particle) complex.

It is found in the golgi apparatus. Its subcellular location is the cis-Golgi network. The protein localises to the endoplasmic reticulum. Its function is as follows. May play a role in vesicular transport from endoplasmic reticulum to Golgi. This chain is Trafficking protein particle complex subunit 3 (trappc3), found in Dictyostelium discoideum (Social amoeba).